The primary structure comprises 228 residues: Chromatin remodeling protein SHL (228 aa).

One can recognise a BAH domain in the interval 21 to 137; that stretch reads KSIQEGDAVL…STTGAFDPDR (117 aa). A PHD-type zinc finger spans residues 139–190; that stretch reads TVFCKCEMPYNPDDLMVQCEECSEWFHPSCIGTTIEEAKKPDNFYCEECSPQ. Residues 191–203 are compositionally biased toward polar residues; sequence QQNLHNSNSTSNN. The interval 191 to 228 is disordered; the sequence is QQNLHNSNSTSNNRDAKVNGKRSLEVTKSKNKHTKRPG. A compositionally biased stretch (basic and acidic residues) spans 204 to 218; it reads RDAKVNGKRSLEVTK. The Nuclear localization signal signature appears at 210 to 217; the sequence is GKRSLEVT. The span at 219 to 228 shows a compositional bias: basic residues; that stretch reads SKNKHTKRPG.

Belongs to the SHL1/EBS protein family. As to quaternary structure, recognizes di- and trimethylated histone H3 at lysine 4. Interacts with HDA6. Interacts with DEK3. As to expression, expressed ubiquitously. Mostly expressed in roots, stems, leaves and flowers, and, to a lower extent, in siliques.

It localises to the nucleus. In terms of biological role, chromatin remodeling factor that binds to methylated histone (e.g. H3K4me2/3) to prevent their acetylation (e.g. H3K9K14Ac), likely by recruiting histone deacetylase (HDAC) complexes, and thus regulate the transcription of target genes. Required during development and for fertility, probably by modulating developmental gene expression. Promotes development speed, but at fitness cost. Involved in the chromatin-mediated repression of floral initiation and controls genes regulating flowering. Negatively regulates the expression of the floral integrator SOC1, by preventing high levels of H3 acetylation, thus maintaining an inactive chromatin conformation. The sequence is that of Chromatin remodeling protein SHL from Arabidopsis thaliana (Mouse-ear cress).